A 108-amino-acid polypeptide reads, in one-letter code: UPF0060 membrane protein YnfA (108 aa).

The Periplasmic portion of the chain corresponds to 1–5 (MFKTT). The helical transmembrane segment at 6–26 (LLFFITALCEIIGCFLPWLWL) threads the bilayer. Residues 27–30 (KRNG) lie on the Cytoplasmic side of the membrane. A helical membrane pass occupies residues 31 to 51 (SIWLLLPAGVSLAFFVWLLTL). Over 52–60 (HPAASGRVY) the chain is Periplasmic. The helical transmembrane segment at 61-81 (AAYGGVYVCTALLWLRFIDGV) threads the bilayer. At 82 to 84 (KLS) the chain is on the cytoplasmic side. The helical transmembrane segment at 85-105 (LYDWSGALIALCGMLIIVAGW) threads the bilayer. The Periplasmic segment spans residues 106-108 (GRA).

Belongs to the UPF0060 family.

The protein resides in the cell inner membrane. This is UPF0060 membrane protein YnfA from Escherichia fergusonii (strain ATCC 35469 / DSM 13698 / CCUG 18766 / IAM 14443 / JCM 21226 / LMG 7866 / NBRC 102419 / NCTC 12128 / CDC 0568-73).